The primary structure comprises 205 residues: Penta-EF hand domain-containing protein 2 (205 aa).

3 EF-hand domains span residues 45–75, 76–111, and 119–141; these read EMQS…GGTP, LGIE…INNL, and DRNF…SGFQ. Asp-54, Asn-56, Ser-58, Thr-60, Glu-65, Asp-89, Asn-91, Asn-93, Gln-95, and Glu-100 together coordinate Ca(2+).

Belongs to the Peflin/Sorcin family. As to quaternary structure, in contrast to pefA, does not form homodimers in presence of Ca(2+). May form heterodimers with pefA.

The protein resides in the cytoplasm. It localises to the membrane. The polypeptide is Penta-EF hand domain-containing protein 2 (pefB) (Dictyostelium discoideum (Social amoeba)).